Consider the following 303-residue polypeptide: MPGLLSDILAWVVIGTFVAGAVANGRDRELGRRVMTAAWVLFALFWLQLIPHFTLVHKSYIEGLLTIAAVPASLYAGWLLYNGRDTLFVLSRAVAAMGVVYLPFETIPAFTLLGATVPAPRGVLMETVAAQTRFLIESLGYTPQMIVGDQGYLNTFLWMQGSHRLEISVVLACTGLGSIAIFAGLIAAVDAPMGRKLRGLAIAVPIIYALNLLRTTFIAISVGKQYFHLFVDEVLFLFGSSDPYMVSFFISDRIISQALAVVALVGVTYLVVHEVPELLTVIEDVLYMVTGDEYDLRNELGLD.

7 helical membrane-spanning segments follow: residues 3–23 (GLLSDILAWVVIGTFVAGAVA), 36–56 (TAAWVLFALFWLQLIPHFTLV), 60–80 (YIEGLLTIAAVPASLYAGWLL), 93–113 (AVAAMGVVYLPFETIPAFTLL), 169–189 (VVLACTGLGSIAIFAGLIAAV), 200–220 (LAIAVPIIYALNLLRTTFIAI), and 259–279 (LAVVALVGVTYLVVHEVPELL). C173 serves as the catalytic Acyl-thioester intermediate. R214 serves as the catalytic Proton donor.

The protein belongs to the exosortase/archaeosortase family. Archaeosortase A subfamily.

It localises to the cell membrane. In terms of biological role, transpeptidase that recognizes and modifies its substrate by proteolytic cleavage of a sorting signal. Following cleavage, a covalent intermediate is formed via a thioester bond between the archaeosortase and its substrate, which is then transferred and covalently attached to the cell membrane. This sortase recognizes a tripartite structure consisting of a conserved Pro-Gly-Phe (PGF) motif, followed by a transmembrane alpha helix domain and a cluster of basic residues, usually at the C-terminus of target proteins. Confirmed substrates include the cell surface S-layer glycoprotein Csg and HVO_0405. ArtA is required for the C-terminal processing of Csg and for its lipidation and attachment to the archaeal plasma membrane. It is also required for the processing of HVO_0405, which contains an atypical central tripartite structure. This is Archaeosortase A from Haloferax volcanii (strain ATCC 29605 / DSM 3757 / JCM 8879 / NBRC 14742 / NCIMB 2012 / VKM B-1768 / DS2) (Halobacterium volcanii).